The following is a 149-amino-acid chain: Deoxyuridine 5'-triphosphate nucleotidohydrolase (149 aa).

Residues 68–70 (RSG), Asn-81, and 85–87 (LID) contribute to the substrate site.

It belongs to the dUTPase family. Mg(2+) serves as cofactor.

It catalyses the reaction dUTP + H2O = dUMP + diphosphate + H(+). The protein operates within pyrimidine metabolism; dUMP biosynthesis; dUMP from dCTP (dUTP route): step 2/2. Its function is as follows. This enzyme is involved in nucleotide metabolism: it produces dUMP, the immediate precursor of thymidine nucleotides and it decreases the intracellular concentration of dUTP so that uracil cannot be incorporated into DNA. In Aromatoleum aromaticum (strain DSM 19018 / LMG 30748 / EbN1) (Azoarcus sp. (strain EbN1)), this protein is Deoxyuridine 5'-triphosphate nucleotidohydrolase.